The sequence spans 949 residues: Insulin receptor substrate 1 (949 aa).

Residues 8 to 109 form the PH domain; sequence GMALSGYLKK…WLDKLLVLQR (102 aa). In terms of domain architecture, IRS-type PTB spans 122 to 236; the sequence is YDQVWQVVIQ…SAMSAKTESN (115 aa). The disordered stretch occupies residues 247–270; it reads PDLSHEPMRKRSSSANEASKPINV. Ser-286, Ser-287, and Ser-342 each carry phosphoserine. Positions 304-345 are enriched in polar residues; that stretch reads RNGTLSESSNQTYFGSNHGLRSNTISGNRPHSTNKHSNSPTF. The disordered stretch occupies residues 304-373; the sequence is RNGTLSESSN…SDDNGSYSHY (70 aa). Tyr-410 carries the phosphotyrosine; by INSR modification. The short motif at 410–413 is the YXXM motif 1 element; sequence YIPM. The disordered stretch occupies residues 530–556; that stretch reads RSQSSITKEGSGYGTSGNRQKKSTSAP. Position 554 is a phosphoserine (Ser-554). The short motif at 640–643 is the YXXM motif 2 element; it reads YLEM. Basic and acidic residues predominate over residues 696–706; that stretch reads REQTTSEEKKS. A disordered region spans residues 696-718; the sequence is REQTTSEEKKSNSPLNEKPFSLK. At Tyr-892 the chain carries Phosphotyrosine; by INSR. Residues 906-949 form a disordered region; the sequence is AKYLKRGSRESPPVSACPEDGNTYAKIDFDQSDSSSSSSNIFNT. Residues Ser-913 and Ser-916 each carry the phosphoserine modification. Residue Tyr-929 is modified to Phosphotyrosine; by INSR. Residues 937–949 are compositionally biased toward low complexity; sequence SDSSSSSSNIFNT.

In terms of assembly, bindings to phosphatidylinositol 3-kinase and SHP2.

Functionally, activates phosphatidylinositol 3-kinase when bound to the regulatory p85 subunit. May mediate the control of various cellular processes by insulin-like peptides. When phosphorylated by the insulin receptor binds specifically to various cellular proteins containing SH2 domains. Involved in control of cell proliferation, cell size, and body and organ growth throughout development. Also has a role in a signaling pathway controlling the physiological response required to endure periods of low nutrient conditions. Insulin/insulin-like growth factor (IGF) signaling pathway has a role in regulating aging and is necessary in the ovary for vitellogenic maturation. The protein is Insulin receptor substrate 1 of Drosophila yakuba (Fruit fly).